A 420-amino-acid polypeptide reads, in one-letter code: UPF0053 protein HI_0107 (420 aa).

The 189-residue stretch at 2–190 folds into the CNNM transmembrane domain; it reads DSIPLSTLFI…GEATPNEQHP (189 aa). Transmembrane regions (helical) follow at residues 3-23, 65-85, 92-112, and 126-146; these read SIPL…SAYF, FILI…TVIG, AGVA…SEIF, and FFSS…VWLM. 2 consecutive CBS domains span residues 208–268 and 273–333; these read MVPR…KNEF and LIRA…FTTS.

This sequence belongs to the UPF0053 family.

The protein localises to the cell membrane. The polypeptide is UPF0053 protein HI_0107 (Haemophilus influenzae (strain ATCC 51907 / DSM 11121 / KW20 / Rd)).